We begin with the raw amino-acid sequence, 60 residues long: Metallothionein (60 aa).

The segment at 1–28 (MDCACATGGSCSCAGSCKCENCKCTSCK) is beta. 20 residues coordinate a divalent metal cation: cysteine 3, cysteine 5, cysteine 11, cysteine 13, cysteine 17, cysteine 19, cysteine 22, cysteine 24, cysteine 27, cysteine 31, cysteine 32, cysteine 34, cysteine 35, cysteine 39, cysteine 42, cysteine 46, cysteine 48, cysteine 56, cysteine 58, and cysteine 59. Residues 29–60 (KSCCSCCPSECEKCGQGCVCKGGSSEKCSCCN) are alpha.

The protein belongs to the metallothionein superfamily. Type 1 family.

Its function is as follows. Metallothioneins have a high content of cysteine residues that bind various heavy metals. This chain is Metallothionein (MT-A), found in Ambystoma mexicanum (Axolotl).